Consider the following 46-residue polypeptide: Diuretic hormone (46 aa).

I46 bears the Isoleucine amide mark.

The protein belongs to the sauvagine/corticotropin-releasing factor/urotensin I family.

The protein localises to the secreted. Functionally, regulation of fluid secretion. Stimulates primary urine secretion by Malpighian tubules and causes a dose-dependent stimulation of cAMP levels in the tubules. The polypeptide is Diuretic hormone (Acheta domesticus (House cricket)).